The chain runs to 535 residues: MFEPVATARHWAVACCTFTIEQEDVVQWLIWALPALVIGLAIGAGIGILIYKKSVQSQIRQIEAEARLQLEATRSEQKDLILRATDEALRLRAEAEAQIREARAALAKQEERLQRKEENLDRKIEGLERRERQLQQRERQMEQLHQEAEQLRQQQRAELERISALSQEEARAIILKRVEDETRDEAARRIREIEKNVREEADKLARKVISMAIQRCASEYVAEVTVSTVALPSEELKGRIIGREGRNIRAFEQLTGVDIIVDDTPEAVTLSCHDPVRREVARLALIKLLKDGRIHPTRIEEVVSKTQQEVEQIMREEGERVAYEANVQGLHPDLIKLLGRLKYRTSYGQNVLQHSLECALLAAHIAAEIGANINVAKTAALLHDIGKAVDHEVQGPHALIGAEIARRLGKSPAIVHAIAAHHNDEEPQTVEAWLVQAVDAISGGRPGARRETLDLYIKRLEALETVATSFTGVQRAFAVQAGREVRVMVQPDAIDDLGSIHLARDVAKKIEESLQYPGQIKVTVIRETRAVDYAR.

A helical transmembrane segment spans residues 30-50 (IWALPALVIGLAIGAGIGILI). The region spanning 225–285 (TVSTVALPSE…VRREVARLAL (61 aa)) is the KH domain. The 94-residue stretch at 351-444 (VLQHSLECAL…VQAVDAISGG (94 aa)) folds into the HD domain.

This sequence belongs to the RNase Y family.

The protein localises to the cell membrane. Functionally, endoribonuclease that initiates mRNA decay. This Roseiflexus sp. (strain RS-1) protein is Ribonuclease Y.